Consider the following 93-residue polypeptide: ATP synthase subunit c (93 aa).

Transmembrane regions (helical) follow at residues 13 to 33 (AIGV…GMGI) and 58 to 78 (ISLA…FILL).

Belongs to the ATPase C chain family. As to quaternary structure, F-type ATPases have 2 components, F(1) - the catalytic core - and F(0) - the membrane proton channel. F(1) has five subunits: alpha(3), beta(3), gamma(1), delta(1), epsilon(1). F(0) has three main subunits: a(1), b(2) and c(10-14). The alpha and beta chains form an alternating ring which encloses part of the gamma chain. F(1) is attached to F(0) by a central stalk formed by the gamma and epsilon chains, while a peripheral stalk is formed by the delta and b chains.

It localises to the cell inner membrane. Functionally, f(1)F(0) ATP synthase produces ATP from ADP in the presence of a proton or sodium gradient. F-type ATPases consist of two structural domains, F(1) containing the extramembraneous catalytic core and F(0) containing the membrane proton channel, linked together by a central stalk and a peripheral stalk. During catalysis, ATP synthesis in the catalytic domain of F(1) is coupled via a rotary mechanism of the central stalk subunits to proton translocation. Key component of the F(0) channel; it plays a direct role in translocation across the membrane. A homomeric c-ring of between 10-14 subunits forms the central stalk rotor element with the F(1) delta and epsilon subunits. The chain is ATP synthase subunit c from Campylobacter hominis (strain ATCC BAA-381 / DSM 21671 / CCUG 45161 / LMG 19568 / NCTC 13146 / CH001A).